The primary structure comprises 296 residues: Phosphatidylglycerol--prolipoprotein diacylglyceryl transferase (296 aa).

3 helical membrane passes run 17 to 37 (LAVRWYGLMYLVGFIFAIVVG), 59 to 79 (MMFYGVLGVVLGGRLGYVLFY), and 97 to 117 (GGMSFHGGFLGVTLAMALFAW). A 1,2-diacyl-sn-glycero-3-phospho-(1'-sn-glycerol) is bound at residue R142. 2 helical membrane-spanning segments follow: residues 230-250 (MGAISALFLIGYGAARFTVEF) and 265-285 (LSMGQWLSLPMIVAGVLMMIW).

Belongs to the Lgt family.

It localises to the cell inner membrane. It carries out the reaction L-cysteinyl-[prolipoprotein] + a 1,2-diacyl-sn-glycero-3-phospho-(1'-sn-glycerol) = an S-1,2-diacyl-sn-glyceryl-L-cysteinyl-[prolipoprotein] + sn-glycerol 1-phosphate + H(+). It functions in the pathway protein modification; lipoprotein biosynthesis (diacylglyceryl transfer). Functionally, catalyzes the transfer of the diacylglyceryl group from phosphatidylglycerol to the sulfhydryl group of the N-terminal cysteine of a prolipoprotein, the first step in the formation of mature lipoproteins. The chain is Phosphatidylglycerol--prolipoprotein diacylglyceryl transferase from Burkholderia pseudomallei (strain 668).